The sequence spans 181 residues: Probable N-acetyltransferase YjcK (181 aa).

One can recognise an N-acetyltransferase domain in the interval 7–172; that stretch reads IYVRPLEVTD…NGVWEDHQVL (166 aa).

The protein belongs to the acetyltransferase family. RimJ subfamily.

It carries out the reaction an N-terminal L-alpha-aminoacyl-[protein] + acetyl-CoA = N-terminal N(alpha)-acetyl-L-alpha-aminoacyl-[protein] + CoA + H(+). Its function is as follows. Probable N-terminal protein acetyltransferase. This chain is Probable N-acetyltransferase YjcK (yjcK), found in Bacillus subtilis (strain 168).